The chain runs to 254 residues: Persulfide dioxygenase ETHE1, mitochondrial (254 aa).

The transit peptide at 1–7 (MAEAVLR) directs the protein to the mitochondrion. Ser-14 and Ser-19 each carry phosphoserine. Lys-66 is modified (N6-acetyllysine). Residues His-79, His-135, and Asp-154 each coordinate Fe cation. At Lys-172 the chain carries N6-acetyllysine; alternate. Lys-172 carries the post-translational modification N6-succinyllysine; alternate.

Belongs to the metallo-beta-lactamase superfamily. Glyoxalase II family. In terms of assembly, homodimer. Monomer. Interacts with TST. May interact with RELA. The cofactor is Fe(2+). As to expression, ubiquitously expressed.

The protein resides in the cytoplasm. It localises to the nucleus. Its subcellular location is the mitochondrion matrix. It catalyses the reaction S-sulfanylglutathione + O2 + H2O = sulfite + glutathione + 2 H(+). Its activity is regulated as follows. Glutathione increases enzyme activity. In terms of biological role, sulfur dioxygenase that plays an essential role in hydrogen sulfide catabolism in the mitochondrial matrix. Hydrogen sulfide (H(2)S) is first oxidized by SQRDL, giving rise to cysteine persulfide residues. ETHE1 consumes molecular oxygen to catalyze the oxidation of the persulfide, once it has been transferred to a thiophilic acceptor, such as glutathione (R-SSH). Plays an important role in metabolic homeostasis in mitochondria by metabolizing hydrogen sulfide and preventing the accumulation of supraphysiological H(2)S levels that have toxic effects, due to the inhibition of cytochrome c oxidase. First described as a protein that can shuttle between the nucleus and the cytoplasm and suppress p53-induced apoptosis by sequestering the transcription factor RELA/NFKB3 in the cytoplasm and preventing its accumulation in the nucleus. The polypeptide is Persulfide dioxygenase ETHE1, mitochondrial (ETHE1) (Homo sapiens (Human)).